The chain runs to 271 residues: DNA repair protein RecO (271 aa).

It belongs to the RecO family.

Its function is as follows. Involved in DNA repair and RecF pathway recombination. The protein is DNA repair protein RecO of Synechococcus sp. (strain CC9311).